Consider the following 233-residue polypeptide: DnaA regulatory inactivator Hda (233 aa).

Belongs to the DnaA family. HdA subfamily. As to quaternary structure, the active form seems to be an ADP-bound monomer. Forms the RIDA complex (regulatory inactivation of DnaA) of ATP-DnaA, ADP-Hda and the DNA-loaded beta sliding clamp (dnaN).

In terms of biological role, mediates the interaction of DNA replication initiator protein DnaA with DNA polymerase subunit beta sliding clamp (dnaN). Stimulates hydrolysis of ATP-DnaA to ADP-DnaA, rendering DnaA inactive for reinitiation, a process called regulatory inhibition of DnaA or RIDA. The chain is DnaA regulatory inactivator Hda from Photorhabdus laumondii subsp. laumondii (strain DSM 15139 / CIP 105565 / TT01) (Photorhabdus luminescens subsp. laumondii).